The chain runs to 113 residues: Hydrogenase maturation factor HypA (113 aa).

His-2 contributes to the Ni(2+) binding site. 4 residues coordinate Zn(2+): Cys-70, Cys-73, Cys-86, and Cys-88.

The protein belongs to the HypA/HybF family.

Involved in the maturation of [NiFe] hydrogenases. Required for nickel insertion into the metal center of the hydrogenase. The polypeptide is Hydrogenase maturation factor HypA (Nostoc sp. (strain PCC 7120 / SAG 25.82 / UTEX 2576)).